Consider the following 121-residue polypeptide: Large ribosomal subunit protein uL14c (121 aa).

This sequence belongs to the universal ribosomal protein uL14 family. Part of the 50S ribosomal subunit.

The protein localises to the plastid. It localises to the chloroplast. Binds to 23S rRNA. The sequence is that of Large ribosomal subunit protein uL14c from Nephroselmis olivacea (Green alga).